The following is a 240-amino-acid chain: UDP-2,3-diacylglucosamine hydrolase (240 aa).

Residues aspartate 9, histidine 11, aspartate 43, asparagine 81, and histidine 116 each coordinate Mn(2+). A substrate-binding site is contributed by 81–82; the sequence is NR. Substrate-binding residues include aspartate 124, serine 162, lysine 166, lysine 169, and histidine 197. Positions 197 and 199 each coordinate Mn(2+).

Belongs to the LpxH family. The cofactor is Mn(2+).

The protein resides in the cell inner membrane. The catalysed reaction is UDP-2-N,3-O-bis[(3R)-3-hydroxytetradecanoyl]-alpha-D-glucosamine + H2O = 2-N,3-O-bis[(3R)-3-hydroxytetradecanoyl]-alpha-D-glucosaminyl 1-phosphate + UMP + 2 H(+). It participates in glycolipid biosynthesis; lipid IV(A) biosynthesis; lipid IV(A) from (3R)-3-hydroxytetradecanoyl-[acyl-carrier-protein] and UDP-N-acetyl-alpha-D-glucosamine: step 4/6. Its function is as follows. Hydrolyzes the pyrophosphate bond of UDP-2,3-diacylglucosamine to yield 2,3-diacylglucosamine 1-phosphate (lipid X) and UMP by catalyzing the attack of water at the alpha-P atom. Involved in the biosynthesis of lipid A, a phosphorylated glycolipid that anchors the lipopolysaccharide to the outer membrane of the cell. The sequence is that of UDP-2,3-diacylglucosamine hydrolase from Neisseria meningitidis serogroup A / serotype 4A (strain DSM 15465 / Z2491).